The sequence spans 505 residues: Serine/threonine protein kinase OSK1 (505 aa).

The region spanning 14–266 is the Protein kinase domain; it reads YRIGKTLGIG…IREIREHQWF (253 aa). ATP is bound by residues 20-28 and Lys43; that span reads LGIGSFGKV. The active-site Proton acceptor is Asp137. One can recognise a UBA domain in the interval 287-327; the sequence is KLDDETLNDVINMGFDKNQLIESLHKRLQNEATVAYYLLLD. The span at 347 to 361 shows a compositional bias: polar residues; sequence SSLAQVTPAETPNSA. The disordered stretch occupies residues 347–372; that stretch reads SSLAQVTPAETPNSATDHRQHGHMES. The 49-residue stretch at 456–504 folds into the KA1 domain; it reads SEKSTHTVKFEIQLYKTRDEKYLLDLQRVSGPQLLFLDLCSAFLTQLRV.

It belongs to the protein kinase superfamily. Ser/Thr protein kinase family. Expressed in young roots, young shoots, flowers, and immature seeds. Mostly expressed in leaf sheaths and roots, and to a lower extent, in germinating seeds, leaf blades and panicles.

The protein localises to the nucleus. It catalyses the reaction L-seryl-[protein] + ATP = O-phospho-L-seryl-[protein] + ADP + H(+). The catalysed reaction is L-threonyl-[protein] + ATP = O-phospho-L-threonyl-[protein] + ADP + H(+). Its function is as follows. Serine/threonine-protein kinase involved in sugar signaling during germination and seedling growth. Negative regulators of sugar response complex (SRC) in alpha-amylase gene promoters, thus relieving SRC sugar repression in a MYBS1-dependent manner. Required for MYBS1 and AAMY3 accumulation under glucose starvation. This chain is Serine/threonine protein kinase OSK1, found in Oryza sativa subsp. japonica (Rice).